The following is an 86-amino-acid chain: UPF0297 protein SH1302 (86 aa).

It belongs to the UPF0297 family.

The protein is UPF0297 protein SH1302 of Staphylococcus haemolyticus (strain JCSC1435).